A 497-amino-acid chain; its full sequence is Protein nucleotidyltransferase YdiU (497 aa).

ATP-binding residues include G88, G90, R91, K110, D122, G123, R173, and R180. D249 (proton acceptor) is an active-site residue. Residues N250 and D259 each contribute to the Mg(2+) site. D259 is an ATP binding site.

The protein belongs to the SELO family. Requires Mg(2+) as cofactor. Mn(2+) is required as a cofactor.

It carries out the reaction L-seryl-[protein] + ATP = 3-O-(5'-adenylyl)-L-seryl-[protein] + diphosphate. It catalyses the reaction L-threonyl-[protein] + ATP = 3-O-(5'-adenylyl)-L-threonyl-[protein] + diphosphate. The catalysed reaction is L-tyrosyl-[protein] + ATP = O-(5'-adenylyl)-L-tyrosyl-[protein] + diphosphate. The enzyme catalyses L-histidyl-[protein] + UTP = N(tele)-(5'-uridylyl)-L-histidyl-[protein] + diphosphate. It carries out the reaction L-seryl-[protein] + UTP = O-(5'-uridylyl)-L-seryl-[protein] + diphosphate. It catalyses the reaction L-tyrosyl-[protein] + UTP = O-(5'-uridylyl)-L-tyrosyl-[protein] + diphosphate. Its function is as follows. Nucleotidyltransferase involved in the post-translational modification of proteins. It can catalyze the addition of adenosine monophosphate (AMP) or uridine monophosphate (UMP) to a protein, resulting in modifications known as AMPylation and UMPylation. This Methylorubrum extorquens (strain CM4 / NCIMB 13688) (Methylobacterium extorquens) protein is Protein nucleotidyltransferase YdiU.